A 230-amino-acid chain; its full sequence is Urease accessory protein UreE (230 aa).

Basic and acidic residues-rich tracts occupy residues 182-193 (HVHVDSPLDEPH) and 204-230 (SHGD…DHKH). Residues 182–230 (HVHVDSPLDEPHGSGLHVHAIHSHGDGHSHSHSHDHDHDHRHDDHDHKH) form a disordered region.

This sequence belongs to the UreE family.

The protein localises to the cytoplasm. In terms of biological role, involved in urease metallocenter assembly. Binds nickel. Probably functions as a nickel donor during metallocenter assembly. The protein is Urease accessory protein UreE of Yersinia mollaretii.